A 197-amino-acid chain; its full sequence is MSTILHITASIRGDESISRALSSKLVERLSGTDTKVITRDLSQNDIPYVDADRFAANLSPYTERSPEQQELAAIADTLIEELQAADTIVLGVPIYNFSVPATVKAWADTVARAGTTFEYTPTGPKGKLDGKKAYITVASGGTPVGSEVDFMSPWLKFFLGFLGISEVEVVATADGIMGEGGEEKIASAHKQVEQVAA.

FMN-binding positions include serine 10 and 16-18; that span reads SIS.

It belongs to the azoreductase type 1 family. In terms of assembly, homodimer. The cofactor is FMN.

The catalysed reaction is 2 a quinone + NADH + H(+) = 2 a 1,4-benzosemiquinone + NAD(+). It carries out the reaction N,N-dimethyl-1,4-phenylenediamine + anthranilate + 2 NAD(+) = 2-(4-dimethylaminophenyl)diazenylbenzoate + 2 NADH + 2 H(+). Quinone reductase that provides resistance to thiol-specific stress caused by electrophilic quinones. Its function is as follows. Also exhibits azoreductase activity. Catalyzes the reductive cleavage of the azo bond in aromatic azo compounds to the corresponding amines. The sequence is that of FMN-dependent NADH:quinone oxidoreductase from Erythrobacter litoralis (strain HTCC2594).